Consider the following 279-residue polypeptide: Proteasome subunit beta (279 aa).

The propeptide at 1–53 is removed in mature form; by autocatalysis; it reads MSGTAEFPGRIPAPYLEVGSSSFVELLGSVAPELLPGRRPLPPGDMGDAAPHG. Residue T54 is the Nucleophile of the active site.

It belongs to the peptidase T1B family. As to quaternary structure, the 20S proteasome core is composed of 14 alpha and 14 beta subunits that assemble into four stacked heptameric rings, resulting in a barrel-shaped structure. The two inner rings, each composed of seven catalytic beta subunits, are sandwiched by two outer rings, each composed of seven alpha subunits. The catalytic chamber with the active sites is on the inside of the barrel. Has a gated structure, the ends of the cylinder being occluded by the N-termini of the alpha-subunits. Is capped by the proteasome-associated ATPase, ARC.

The protein resides in the cytoplasm. It carries out the reaction Cleavage of peptide bonds with very broad specificity.. The protein operates within protein degradation; proteasomal Pup-dependent pathway. With respect to regulation, the formation of the proteasomal ATPase ARC-20S proteasome complex, likely via the docking of the C-termini of ARC into the intersubunit pockets in the alpha-rings, may trigger opening of the gate for substrate entry. Interconversion between the open-gate and close-gate conformations leads to a dynamic regulation of the 20S proteasome proteolysis activity. Its function is as follows. Component of the proteasome core, a large protease complex with broad specificity involved in protein degradation. This is Proteasome subunit beta from Stackebrandtia nassauensis (strain DSM 44728 / CIP 108903 / NRRL B-16338 / NBRC 102104 / LLR-40K-21).